The following is a 295-amino-acid chain: Bifunctional protein FolD (295 aa).

NADP(+) contacts are provided by residues 166–168 (GRS), S191, and I232.

Belongs to the tetrahydrofolate dehydrogenase/cyclohydrolase family. Homodimer.

The catalysed reaction is (6R)-5,10-methylene-5,6,7,8-tetrahydrofolate + NADP(+) = (6R)-5,10-methenyltetrahydrofolate + NADPH. The enzyme catalyses (6R)-5,10-methenyltetrahydrofolate + H2O = (6R)-10-formyltetrahydrofolate + H(+). It functions in the pathway one-carbon metabolism; tetrahydrofolate interconversion. In terms of biological role, catalyzes the oxidation of 5,10-methylenetetrahydrofolate to 5,10-methenyltetrahydrofolate and then the hydrolysis of 5,10-methenyltetrahydrofolate to 10-formyltetrahydrofolate. The sequence is that of Bifunctional protein FolD from Rhodopseudomonas palustris (strain BisB5).